The following is a 901-amino-acid chain: HTH-type transcriptional regulator MalT (901 aa).

39–46 (SPAGYGKT) contacts ATP. The 66-residue stretch at 829-894 (ELIRTSPLTQ…DAVQHAQQLL (66 aa)) folds into the HTH luxR-type domain. Positions 853–872 (NEQIAGELAVAATTIKTHIR) form a DNA-binding region, H-T-H motif.

Belongs to the MalT family. In terms of assembly, monomer in solution. Oligomerizes to an active state in the presence of the positive effectors ATP and maltotriose.

Its activity is regulated as follows. Activated by ATP and maltotriose, which are both required for DNA binding. Positively regulates the transcription of the maltose regulon whose gene products are responsible for uptake and catabolism of malto-oligosaccharides. Specifically binds to the promoter region of its target genes, recognizing a short DNA motif called the MalT box. The sequence is that of HTH-type transcriptional regulator MalT from Salmonella typhi.